A 131-amino-acid chain; its full sequence is Small ribosomal subunit protein uS11 (131 aa).

It belongs to the universal ribosomal protein uS11 family. Part of the 30S ribosomal subunit. Interacts with proteins S7 and S18. Binds to IF-3. Interacts with VmlR. Interacts with BrxC.

In terms of biological role, located on the platform of the 30S subunit, it bridges several disparate RNA helices of the 16S rRNA. Forms part of the Shine-Dalgarno cleft in the 70S ribosome. The polypeptide is Small ribosomal subunit protein uS11 (Bacillus subtilis (strain 168)).